A 404-amino-acid chain; its full sequence is Zinc finger protein zfs1 (404 aa).

Polar residues predominate over residues 134 to 149 (SYLHSGSSPHGNTSNH). Disordered regions lie at residues 134-168 (SYLH…TGSG) and 259-322 (SNAS…APNG). Positions 150–168 (PSPISSLESLPSRSSTGSG) are enriched in low complexity. The segment covering 259-283 (SNASIRNAPSNLSKQFSPSGNSPLT) has biased composition (polar residues). The span at 304–317 (GSASHPHGSGSSNG) shows a compositional bias: low complexity. 2 consecutive C3H1-type zinc fingers follow at residues 326-354 (LYKT…HGNQ) and 364-392 (KYKS…HDES).

As to quaternary structure, interacts with moc3.

The protein resides in the cytoplasm. It is found in the nucleus. Its function is as follows. Binds to specific AU-rich elements (ARE) in the 3'-untranslated region of target mRNAs and promotes their degradation. Binds to ARE present in the arz1 mRNA and stimulates the rate of arz1 mRNA decay. Required for coordination of septum formation with exit from mitosis. Involved in the mating response pathway. Induces sexual development and ascus formation. In Schizosaccharomyces pombe (strain 972 / ATCC 24843) (Fission yeast), this protein is Zinc finger protein zfs1 (zfs1).